Here is a 578-residue protein sequence, read N- to C-terminus: Isocitrate dehydrogenase kinase/phosphatase (578 aa).

ATP contacts are provided by residues 315 to 321 (APGIRGM) and Lys-336. Residue Asp-371 is part of the active site.

This sequence belongs to the AceK family.

It is found in the cytoplasm. It catalyses the reaction L-seryl-[isocitrate dehydrogenase] + ATP = O-phospho-L-seryl-[isocitrate dehydrogenase] + ADP + H(+). Its function is as follows. Bifunctional enzyme which can phosphorylate or dephosphorylate isocitrate dehydrogenase (IDH) on a specific serine residue. This is a regulatory mechanism which enables bacteria to bypass the Krebs cycle via the glyoxylate shunt in response to the source of carbon. When bacteria are grown on glucose, IDH is fully active and unphosphorylated, but when grown on acetate or ethanol, the activity of IDH declines drastically concomitant with its phosphorylation. The chain is Isocitrate dehydrogenase kinase/phosphatase from Shigella dysenteriae serotype 1 (strain Sd197).